The primary structure comprises 195 residues: ATP-dependent Clp protease proteolytic subunit (195 aa).

Catalysis depends on S102, which acts as the Nucleophile. The active site involves H125.

The protein belongs to the peptidase S14 family. As to quaternary structure, component of the chloroplastic Clp protease core complex.

It localises to the plastid. It is found in the chloroplast stroma. The enzyme catalyses Hydrolysis of proteins to small peptides in the presence of ATP and magnesium. alpha-casein is the usual test substrate. In the absence of ATP, only oligopeptides shorter than five residues are hydrolyzed (such as succinyl-Leu-Tyr-|-NHMec, and Leu-Tyr-Leu-|-Tyr-Trp, in which cleavage of the -Tyr-|-Leu- and -Tyr-|-Trp bonds also occurs).. In terms of biological role, cleaves peptides in various proteins in a process that requires ATP hydrolysis. Has a chymotrypsin-like activity. Plays a major role in the degradation of misfolded proteins. This chain is ATP-dependent Clp protease proteolytic subunit, found in Phaseolus vulgaris (Kidney bean).